A 334-amino-acid chain; its full sequence is B3 domain-containing protein LOC_Os12g40090 (334 aa).

The segment at residues 5-102 (RIRFFRLMTG…SFDVLIFDAS (98 aa)) is a DNA-binding region (TF-B3 1). Residues 142-178 (TSTPSVLIGSPHKASTSKKLSGKTKTNPRKEPEDPNC) are disordered. A compositionally biased stretch (low complexity) spans 154–166 (KASTSKKLSGKTK). The segment at residues 227 to 326 (FVVVLQTAHV…TMTVHVIGKA (100 aa)) is a DNA-binding region (TF-B3 2).

Its subcellular location is the nucleus. The polypeptide is B3 domain-containing protein LOC_Os12g40090 (Oryza sativa subsp. japonica (Rice)).